The sequence spans 341 residues: NADH-ubiquinone oxidoreductase chain 2 (341 aa).

Helical transmembrane passes span I8–G28, F61–L81, I95–P115, F145–G165, L174–M191, M195–F215, L238–P258, L272–L292, and L321–M341.

This sequence belongs to the complex I subunit 2 family.

It localises to the mitochondrion inner membrane. It catalyses the reaction a ubiquinone + NADH + 5 H(+)(in) = a ubiquinol + NAD(+) + 4 H(+)(out). Its function is as follows. Core subunit of the mitochondrial membrane respiratory chain NADH dehydrogenase (Complex I) that is believed to belong to the minimal assembly required for catalysis. Complex I functions in the transfer of electrons from NADH to the respiratory chain. The immediate electron acceptor for the enzyme is believed to be ubiquinone. This Anopheles gambiae (African malaria mosquito) protein is NADH-ubiquinone oxidoreductase chain 2 (mt:ND2).